The sequence spans 217 residues: PTB-containing, cubilin and LRP1-interacting protein (217 aa).

A PID domain is found at 60 to 217 (VTYLGKVSTT…ASQELESDDG (158 aa)). Positions 194-217 (KSDGRIHRSSSSEEASQELESDDG) are disordered. 3 positions are modified to phosphoserine: Ser-202, Ser-203, and Ser-214. Acidic residues predominate over residues 208–217 (ASQELESDDG).

As to quaternary structure, found in a complex with PID1/PCLI1, LRP1 and CUBNI. Interacts with LRP1 and CUBN.

It localises to the cytoplasm. Its function is as follows. Increases proliferation of preadipocytes without affecting adipocytic differentiation. This chain is PTB-containing, cubilin and LRP1-interacting protein (Pid1), found in Mus musculus (Mouse).